Consider the following 351-residue polypeptide: 2-Hydroxyacid oxidase 2 (351 aa).

The 350-residue stretch at 2–351 (SLVCLTDFQA…NRNLVQFSRL (350 aa)) folds into the FMN hydroxy acid dehydrogenase domain. FMN contacts are provided by residues 77-79 (PTG), Ser-106, and Gln-128. Tyr-130 provides a ligand contact to a 2-oxocarboxylate. Thr-156 contributes to the FMN binding site. Arg-165 is an a 2-oxocarboxylate binding site. Phosphothreonine is present on Thr-178. Residue Lys-222 participates in FMN binding. The active-site Proton acceptor is the His-246. Residue Arg-249 participates in a 2-oxocarboxylate binding. FMN is bound by residues 277–281 (DGGVR) and 300–301 (GR). The Microbody targeting signal signature appears at 349 to 351 (SRL).

The protein belongs to the FMN-dependent alpha-hydroxy acid dehydrogenase family. As to quaternary structure, homotetramer. FMN serves as cofactor. As to expression, expressed in the liver and kidney.

The protein resides in the peroxisome. The catalysed reaction is a (2S)-2-hydroxycarboxylate + O2 = a 2-oxocarboxylate + H2O2. It carries out the reaction 2-hydroxyhexadecanoate + O2 = 2-oxohexadecanoate + H2O2. It catalyses the reaction 2-hydroxyoctanoate + O2 = 2-oxooctanoate + H2O2. It participates in lipid metabolism; fatty acid metabolism. Oxidase that catalyzes the oxidation of medium and long chain hydroxyacids such as 2-hydroxyhexadecanoate and 2-hydroxyoctanoate, to the correspondong 2-oxoacids. Its role in the oxidation of 2-hydroxy fatty acids may contribute to the general pathway of fatty acid alpha-oxidation. Active in vitro with the artificial electron acceptor 2,6-dichlorophenolindophenol (DCIP), but O2 is believed to be the physiological electron acceptor, leading to the production of H2O2. Is not active on glycolate, glyoxylate, L-lactate and 2-hydroxybutanoate. The protein is 2-Hydroxyacid oxidase 2 (HAO2) of Homo sapiens (Human).